Consider the following 501-residue polypeptide: Rhazimal synthase (501 aa).

Residues 4 to 24 traverse the membrane as a helical segment; the sequence is MQLSFASAVVYSLIFFVFLLV. The N-linked (GlcNAc...) asparagine glycan is linked to asparagine 282. Cysteine 442 is a heme binding site.

It belongs to the cytochrome P450 family. The cofactor is heme.

The protein resides in the membrane. The catalysed reaction is (19E)-geissoschizine + reduced [NADPH--hemoprotein reductase] + O2 = rhazimal + oxidized [NADPH--hemoprotein reductase] + 2 H2O + H(+). The enzyme catalyses (19E)-geissoschizine + reduced [NADPH--hemoprotein reductase] + O2 = akuammicine + formate + oxidized [NADPH--hemoprotein reductase] + H2O + H(+). Its pathway is alkaloid biosynthesis. A cytochrome P450 monooxygenase involved in the biosynthesis of akuammilan monoterpene indole alkaloids (MIAs) natural products, components with various biological properties such as antidiabetic, antibacterial, anti-inflammatory, anticancer, and antimalarial activities. Catalyzes the conversion of geissoschizine to rhazimal. Can also, with lower efficiency, support the conversion of geissoschizine to akuammicine. In Alstonia scholaris (Dogbane), this protein is Rhazimal synthase.